Here is a 256-residue protein sequence, read N- to C-terminus: Lysine-rich coiled-coil protein 1 (256 aa).

Disordered stretches follow at residues 61–83 (QRIPSGTNHSYPRSCSSSQTEDR) and 141–256 (GHST…ILGF). Composition is skewed to polar residues over residues 64–79 (PSGTNHSYPRSCSSSQ) and 141–153 (GHSTIDPQVSHRQ). Basic and acidic residues-rich tracts occupy residues 161 to 188 (HLEEGRERQEERPKHERKRSSEEMDLNK) and 218 to 227 (KNRDVSSKKE). A coiled-coil region spans residues 208–247 (TEKLKNRKEKKNRDVSSKKEDRKRRKEKKEQGEERTEEEM).

The sequence is that of Lysine-rich coiled-coil protein 1 (Krcc1) from Rattus norvegicus (Rat).